The following is a 107-amino-acid chain: UPF0122 protein EAT1b_2891 (107 aa).

It belongs to the UPF0122 family.

Functionally, might take part in the signal recognition particle (SRP) pathway. This is inferred from the conservation of its genetic proximity to ftsY/ffh. May be a regulatory protein. The sequence is that of UPF0122 protein EAT1b_2891 from Exiguobacterium sp. (strain ATCC BAA-1283 / AT1b).